The sequence spans 229 residues: 7-cyano-7-deazaguanine synthase (229 aa).

9 to 19 (LSGGLDSTTVL) contacts ATP. 4 residues coordinate Zn(2+): C192, C202, C205, and C208.

It belongs to the QueC family. Zn(2+) serves as cofactor.

It carries out the reaction 7-carboxy-7-deazaguanine + NH4(+) + ATP = 7-cyano-7-deazaguanine + ADP + phosphate + H2O + H(+). Its pathway is purine metabolism; 7-cyano-7-deazaguanine biosynthesis. Functionally, catalyzes the ATP-dependent conversion of 7-carboxy-7-deazaguanine (CDG) to 7-cyano-7-deazaguanine (preQ(0)). The polypeptide is 7-cyano-7-deazaguanine synthase (Kineococcus radiotolerans (strain ATCC BAA-149 / DSM 14245 / SRS30216)).